We begin with the raw amino-acid sequence, 69 residues long: Large ribosomal subunit protein bL31 (69 aa).

Residues Cys17, Cys19, Cys37, and Cys40 each contribute to the Zn(2+) site.

It belongs to the bacterial ribosomal protein bL31 family. Type A subfamily. Part of the 50S ribosomal subunit. Requires Zn(2+) as cofactor.

Its function is as follows. Binds the 23S rRNA. This chain is Large ribosomal subunit protein bL31, found in Caldanaerobacter subterraneus subsp. tengcongensis (strain DSM 15242 / JCM 11007 / NBRC 100824 / MB4) (Thermoanaerobacter tengcongensis).